The primary structure comprises 442 residues: Phosphoglucosamine mutase (442 aa).

The active-site Phosphoserine intermediate is Ser-103. 4 residues coordinate Mg(2+): Ser-103, Asp-241, Asp-243, and Asp-245. Ser-103 is subject to Phosphoserine.

It belongs to the phosphohexose mutase family. Requires Mg(2+) as cofactor. Post-translationally, activated by phosphorylation.

It carries out the reaction alpha-D-glucosamine 1-phosphate = D-glucosamine 6-phosphate. Catalyzes the conversion of glucosamine-6-phosphate to glucosamine-1-phosphate. The polypeptide is Phosphoglucosamine mutase (Deinococcus deserti (strain DSM 17065 / CIP 109153 / LMG 22923 / VCD115)).